Here is a 314-residue protein sequence, read N- to C-terminus: tRNA dimethylallyltransferase (314 aa).

9 to 16 contributes to the ATP binding site; the sequence is GPTAVGKT. 11-16 provides a ligand contact to substrate; it reads TAVGKT. Residues 34–37 are interaction with substrate tRNA; that stretch reads DSVQ.

Belongs to the IPP transferase family. As to quaternary structure, monomer. The cofactor is Mg(2+).

The catalysed reaction is adenosine(37) in tRNA + dimethylallyl diphosphate = N(6)-dimethylallyladenosine(37) in tRNA + diphosphate. In terms of biological role, catalyzes the transfer of a dimethylallyl group onto the adenine at position 37 in tRNAs that read codons beginning with uridine, leading to the formation of N6-(dimethylallyl)adenosine (i(6)A). The protein is tRNA dimethylallyltransferase of Desulfitobacterium hafniense (strain Y51).